Here is a 453-residue protein sequence, read N- to C-terminus: uncharacterized protein (453 aa).

Cysteine 74, cysteine 80, cysteine 83, and cysteine 162 together coordinate [4Fe-4S] cluster. S-adenosyl-L-methionine-binding residues include glutamine 286, tyrosine 315, glutamate 336, and aspartate 384. The active-site Nucleophile is cysteine 411.

This sequence belongs to the class I-like SAM-binding methyltransferase superfamily. RNA M5U methyltransferase family.

This is an uncharacterized protein from Staphylococcus aureus (strain MRSA252).